The sequence spans 156 residues: Lipoprotein signal peptidase (156 aa).

Helical transmembrane passes span 37-57, 68-88, and 95-115; these read VIPG…FGFL, FFVV…KSAE, and ILGL…RILY. Residues D120 and D138 contribute to the active site. The chain crosses the membrane as a helical span at residues 133–153; the sequence is AFNVADIAICLGAFAMIVSFY.

It belongs to the peptidase A8 family.

The protein localises to the cell inner membrane. The catalysed reaction is Release of signal peptides from bacterial membrane prolipoproteins. Hydrolyzes -Xaa-Yaa-Zaa-|-(S,diacylglyceryl)Cys-, in which Xaa is hydrophobic (preferably Leu), and Yaa (Ala or Ser) and Zaa (Gly or Ala) have small, neutral side chains.. The protein operates within protein modification; lipoprotein biosynthesis (signal peptide cleavage). Its function is as follows. This protein specifically catalyzes the removal of signal peptides from prolipoproteins. This chain is Lipoprotein signal peptidase, found in Maridesulfovibrio salexigens (strain ATCC 14822 / DSM 2638 / NCIMB 8403 / VKM B-1763) (Desulfovibrio salexigens).